We begin with the raw amino-acid sequence, 107 residues long: Iron-binding protein IscA (107 aa).

C35, C99, and C101 together coordinate Fe cation.

The protein belongs to the HesB/IscA family. Homodimer; may form tetramers and higher multimers. Requires Fe cation as cofactor.

Functionally, is able to transfer iron-sulfur clusters to apo-ferredoxin. Multiple cycles of [2Fe2S] cluster formation and transfer are observed, suggesting that IscA acts catalytically. Recruits intracellular free iron so as to provide iron for the assembly of transient iron-sulfur cluster in IscU in the presence of IscS, L-cysteine and the thioredoxin reductase system TrxA/TrxB. The polypeptide is Iron-binding protein IscA (Proteus mirabilis (strain HI4320)).